The following is a 215-amino-acid chain: 3-isopropylmalate dehydratase small subunit (215 aa).

It belongs to the LeuD family. LeuD type 1 subfamily. Heterodimer of LeuC and LeuD.

It carries out the reaction (2R,3S)-3-isopropylmalate = (2S)-2-isopropylmalate. It functions in the pathway amino-acid biosynthesis; L-leucine biosynthesis; L-leucine from 3-methyl-2-oxobutanoate: step 2/4. Catalyzes the isomerization between 2-isopropylmalate and 3-isopropylmalate, via the formation of 2-isopropylmaleate. The protein is 3-isopropylmalate dehydratase small subunit of Cellvibrio japonicus (strain Ueda107) (Pseudomonas fluorescens subsp. cellulosa).